The chain runs to 372 residues: L-selectin (372 aa).

A signal peptide spans 1–28; sequence MVFPWRCEGTYWGSRNILKLWVWTLLCC. The propeptide occupies 29–38; it reads DFLIHHGTHC. Residues 39 to 332 are Extracellular-facing; that stretch reads WTYHYSEKPM…FSKIKEGDYN (294 aa). In terms of domain architecture, C-type lectin spans 55–155; it reads KFCKQNYTDL…ACHKRKAALC (101 aa). 10 disulfide bridges follow: Cys57–Cys155, Cys128–Cys147, Cys128–Cys160, Cys160–Cys171, Cys165–Cys180, Cys182–Cys191, Cys197–Cys241, Cys227–Cys254, Cys259–Cys303, and Cys289–Cys316. N-linked (GlcNAc...) asparagine glycans are attached at residues Asn60 and Asn104. 5 residues coordinate Ca(2+): Glu118, Asn120, Glu126, Asn143, and Asp144. The EGF-like domain occupies 156–192; the sequence is YTASCQPGSCNGRGECVETINNHTCICDAGYYGPQCQ. A glycan (N-linked (GlcNAc...) asparagine) is linked at Asn177. Sushi domains are found at residues 195-256 and 257-318; these read VQCE…ICQV and VQCE…ICQE. Asn216, Asn226, Asn246, Asn278, Asn288, Asn308, and Asn320 each carry an N-linked (GlcNAc...) asparagine glycan. A helical membrane pass occupies residues 333–355; it reads PLFIPVAVMVTAFSGLAFLIWLA. Over 356 to 372 the chain is Cytoplasmic; the sequence is RRLKKGKKSQERMDDPY.

The protein belongs to the selectin/LECAM family. Interaction with SELPLG/PSGL1 and PODXL2 is required for promoting recruitment and rolling of leukocytes. This interaction is dependent on the sialyl Lewis X glycan modification of SELPLG and PODXL2, and tyrosine sulfation modifications of SELPLG. Sulfation on 'Tyr-51' of SELPLG is important for L-selectin binding. N-glycosylated. In terms of tissue distribution, predominantly expressed in lymphoid tissue.

The protein resides in the cell membrane. Its function is as follows. Calcium-dependent lectin that mediates cell adhesion by binding to glycoproteins on neighboring cells. Mediates the adherence of lymphocytes to endothelial cells of high endothelial venules in peripheral lymph nodes. Promotes initial tethering and rolling of leukocytes in endothelia. The polypeptide is L-selectin (Sell) (Mus musculus (Mouse)).